A 201-amino-acid polypeptide reads, in one-letter code: Superoxide dismutase [Mn] (201 aa).

Residues H27, H81, D163, and H167 each coordinate Mn(2+).

The protein belongs to the iron/manganese superoxide dismutase family. As to quaternary structure, homodimer. Mn(2+) serves as cofactor.

It is found in the secreted. It carries out the reaction 2 superoxide + 2 H(+) = H2O2 + O2. In terms of biological role, destroys superoxide anion radicals which are normally produced within the cells and which are toxic to biological systems. This is Superoxide dismutase [Mn] (sodA) from Streptococcus pyogenes.